Reading from the N-terminus, the 203-residue chain is Tic20 family protein Ycf60 (203 aa).

Helical transmembrane passes span 2 to 22, 51 to 71, 84 to 104, 131 to 151, and 153 to 173; these read IRLF…RLAL, TVPY…YVLP, IILP…VTFF, ILLF…PIEF, and ISFL…STIT.

This sequence belongs to the Tic20 family.

The protein localises to the plastid. It localises to the chloroplast membrane. This Pyropia yezoensis (Susabi-nori) protein is Tic20 family protein Ycf60 (ycf60).